A 253-amino-acid chain; its full sequence is Imidazole glycerol phosphate synthase subunit HisF (253 aa).

Residues Asp11 and Asp130 contribute to the active site.

Belongs to the HisA/HisF family. As to quaternary structure, heterodimer of HisH and HisF.

Its subcellular location is the cytoplasm. It catalyses the reaction 5-[(5-phospho-1-deoxy-D-ribulos-1-ylimino)methylamino]-1-(5-phospho-beta-D-ribosyl)imidazole-4-carboxamide + L-glutamine = D-erythro-1-(imidazol-4-yl)glycerol 3-phosphate + 5-amino-1-(5-phospho-beta-D-ribosyl)imidazole-4-carboxamide + L-glutamate + H(+). It participates in amino-acid biosynthesis; L-histidine biosynthesis; L-histidine from 5-phospho-alpha-D-ribose 1-diphosphate: step 5/9. Functionally, IGPS catalyzes the conversion of PRFAR and glutamine to IGP, AICAR and glutamate. The HisF subunit catalyzes the cyclization activity that produces IGP and AICAR from PRFAR using the ammonia provided by the HisH subunit. This Ruegeria sp. (strain TM1040) (Silicibacter sp.) protein is Imidazole glycerol phosphate synthase subunit HisF.